We begin with the raw amino-acid sequence, 548 residues long: Chaperonin GroEL (548 aa).

ATP-binding positions include 30-33 (TLGP), Lys-51, 87-91 (DGTTT), Gly-415, 479-481 (NAA), and Asp-495.

The protein belongs to the chaperonin (HSP60) family. In terms of assembly, forms a cylinder of 14 subunits composed of two heptameric rings stacked back-to-back. Interacts with the co-chaperonin GroES.

The protein localises to the cytoplasm. The enzyme catalyses ATP + H2O + a folded polypeptide = ADP + phosphate + an unfolded polypeptide.. Functionally, together with its co-chaperonin GroES, plays an essential role in assisting protein folding. The GroEL-GroES system forms a nano-cage that allows encapsulation of the non-native substrate proteins and provides a physical environment optimized to promote and accelerate protein folding. The polypeptide is Chaperonin GroEL (Klebsiella pneumoniae (strain 342)).